The chain runs to 132 residues: Urease subunit beta (132 aa).

The protein belongs to the urease beta subunit family. As to quaternary structure, heterotrimer of UreA (gamma), UreB (beta) and UreC (alpha) subunits. Three heterotrimers associate to form the active enzyme.

It is found in the cytoplasm. The catalysed reaction is urea + 2 H2O + H(+) = hydrogencarbonate + 2 NH4(+). It functions in the pathway nitrogen metabolism; urea degradation; CO(2) and NH(3) from urea (urease route): step 1/1. The chain is Urease subunit beta from Natronomonas pharaonis (strain ATCC 35678 / DSM 2160 / CIP 103997 / JCM 8858 / NBRC 14720 / NCIMB 2260 / Gabara) (Halobacterium pharaonis).